Here is a 916-residue protein sequence, read N- to C-terminus: MVQKESQAALEERESERNANPASVSGASLEPSAAPAPGEDNPSGAGAAAGTGAAGGARRFLCGVVEGFYGRPWVMEQRKELFRRLQKWELNTYLYAPKDDYKHRMFWREMYSVEEAEQLMTLISAAREYEIEFIYAISPGLDITFSNPKEVSTLKRKLDQVSQFGCRSFALLFDDIDHNMCAADKEVFSSFAHAQVSITNEIYQYLGEPETFLFCPTEYCGTFCYPSVSQSPYLRTVGEKLLPGIEVLWTGPKVVSKEIPVESIEEVSKIIKRAPVIWDNIHANDYDQKRLFLGPYKGRSTELIPRLKGVLTNPNCEFEANYVAIHTLATWYKSNMNGVRKDVVMTDSEDSTVSIQIKLENEGSDEDIETDVLYSPQMALKLALTEWLQEFGVPHQYSSRQVAHSGAKTSVVDGTPLVAAPSLNATTVVTTVYQEPIMSQGAALSGEPSALTKEEEKKQPDEEPMDMVVEKQEESEHKSDNQILTEIVEAKMAEELKPMDTDKESIAESKSPEMSMQEDCINDIAPMQTDEQANKEQFVPGPNEKPLYAAEPVTLEDLQLLADLFYLPYEHGPKGAQMLREFQWLRANSSVVSVNCKGKDSEKIEEWRSRAAKFEEMCALVMGMFTRLSNCANRTILYDMYSYVWDIKSIMSMVKSFVQWLGCRSHSSAQFLIGDQEPWAFRGGLAGEFQRLLPIDGANDLFFQPPPLTPTSKVYTIRPYFPKDEASVYKICREMYDDGVGLPFQSQPDLIGDKLVGGLLSLSLDYCFVLEDEDGICGYALGTVDVTPFIKKCKISWIPFMQEKYTKPNGDKELSEAEKIMLSFHEEQEVLPETFLANFPSLIKMDIHKKVTDPSVAKSMMACLLSSLKANGSRGAFCEVRPDDKRILEFYSKLGCFEIAKMEGFPKDVVILGRSL.

The segment at 1–50 (MVQKESQAALEERESERNANPASVSGASLEPSAAPAPGEDNPSGAGAAAG) is disordered. Positions 60–336 (FLCGVVEGFY…TLATWYKSNM (277 aa)) constitute a GH84 domain. A protein is bound by residues G67, K98, and D174. D175 functions as the Proton donor in the catalytic mechanism. Residues Y219, 278-280 (WDN), D285, and N313 each bind a protein. S364 carries the phosphoserine modification. The tract at residues 440–480 (QGAALSGEPSALTKEEEKKQPDEEPMDMVVEKQEESEHKSD) is disordered. Composition is skewed to basic and acidic residues over residues 452-461 (TKEEEKKQPD) and 468-480 (VVEK…HKSD).

This sequence belongs to the glycosyl hydrolase 84 family. As to quaternary structure, monomer. Interacts with CLOCK. Post-translationally, proteolytically cleaved by caspase-3 during apoptosis. The fragments interact with each other; cleavage does not decrease enzyme activity. As to expression, detected in spleen (at protein level). Ubiquitous. Expressed at highest levels in the brain and spleen.

Its subcellular location is the nucleus. The protein resides in the cytoplasm. The catalysed reaction is 3-O-(N-acetyl-beta-D-glucosaminyl)-L-seryl-[protein] + H2O = N-acetyl-D-glucosamine + L-seryl-[protein]. The enzyme catalyses 3-O-(N-acetyl-beta-D-glucosaminyl)-L-threonyl-[protein] + H2O = L-threonyl-[protein] + N-acetyl-D-glucosamine. Its activity is regulated as follows. Inhibited by Cu(2+), Hg(2+), Cd(2+) and Zn(2+) at 1 mM. Not inhibited by Co(2+), Mg(2+), Ca(2+), Mn(2+), Fe(3+) and EDTA. Also inhibited by sodium chloride at 1M and 2-amino-2-hydroxymethyl-1,3-propanediol (trishydroxymethylaminomethane) at 75 mM. Its function is as follows. Cleaves GlcNAc but not GalNAc from O-glycosylated proteins. Deglycosylates a large and diverse number of proteins, such as CRYAB, ELK1, GSDMD, LMNB1 and TAB1. Can use p-nitrophenyl-beta-GlcNAc and 4-methylumbelliferone-GlcNAc as substrates but not p-nitrophenyl-beta-GalNAc or p-nitrophenyl-alpha-GlcNAc (in vitro). Does not bind acetyl-CoA and does not have histone acetyltransferase activity. Functionally, lacks enzyme activity. In Rattus norvegicus (Rat), this protein is Protein O-GlcNAcase.